A 227-amino-acid chain; its full sequence is Cytochrome c oxidase subunit 2 (227 aa).

Over 1 to 14 the chain is Mitochondrial intermembrane; sequence MAYPFQLGFQDATS. Residues 15–45 form a helical membrane-spanning segment; the sequence is PIMEELLHFHDHTLMIVFLISSLVLYIISSM. Residues 46-59 are Mitochondrial matrix-facing; sequence LTTKLTHTSTMDAQ. The helical transmembrane segment at 60-87 threads the bilayer; the sequence is EVETIWTILPAIILILIALPSLRILYMM. The Mitochondrial intermembrane segment spans residues 88-227; it reads DEINNPSLTV…HFEEWSASML (140 aa). Residues His161, Cys196, Glu198, Cys200, His204, and Met207 each coordinate Cu cation. Glu198 is a binding site for Mg(2+).

The protein belongs to the cytochrome c oxidase subunit 2 family. Component of the cytochrome c oxidase (complex IV, CIV), a multisubunit enzyme composed of 14 subunits. The complex is composed of a catalytic core of 3 subunits MT-CO1, MT-CO2 and MT-CO3, encoded in the mitochondrial DNA, and 11 supernumerary subunits COX4I, COX5A, COX5B, COX6A, COX6B, COX6C, COX7A, COX7B, COX7C, COX8 and NDUFA4, which are encoded in the nuclear genome. The complex exists as a monomer or a dimer and forms supercomplexes (SCs) in the inner mitochondrial membrane with NADH-ubiquinone oxidoreductase (complex I, CI) and ubiquinol-cytochrome c oxidoreductase (cytochrome b-c1 complex, complex III, CIII), resulting in different assemblies (supercomplex SCI(1)III(2)IV(1) and megacomplex MCI(2)III(2)IV(2)). Found in a complex with TMEM177, COA6, COX18, COX20, SCO1 and SCO2. Interacts with TMEM177 in a COX20-dependent manner. Interacts with COX20. Interacts with COX16. The cofactor is Cu cation.

Its subcellular location is the mitochondrion inner membrane. The catalysed reaction is 4 Fe(II)-[cytochrome c] + O2 + 8 H(+)(in) = 4 Fe(III)-[cytochrome c] + 2 H2O + 4 H(+)(out). Functionally, component of the cytochrome c oxidase, the last enzyme in the mitochondrial electron transport chain which drives oxidative phosphorylation. The respiratory chain contains 3 multisubunit complexes succinate dehydrogenase (complex II, CII), ubiquinol-cytochrome c oxidoreductase (cytochrome b-c1 complex, complex III, CIII) and cytochrome c oxidase (complex IV, CIV), that cooperate to transfer electrons derived from NADH and succinate to molecular oxygen, creating an electrochemical gradient over the inner membrane that drives transmembrane transport and the ATP synthase. Cytochrome c oxidase is the component of the respiratory chain that catalyzes the reduction of oxygen to water. Electrons originating from reduced cytochrome c in the intermembrane space (IMS) are transferred via the dinuclear copper A center (CU(A)) of subunit 2 and heme A of subunit 1 to the active site in subunit 1, a binuclear center (BNC) formed by heme A3 and copper B (CU(B)). The BNC reduces molecular oxygen to 2 water molecules using 4 electrons from cytochrome c in the IMS and 4 protons from the mitochondrial matrix. This is Cytochrome c oxidase subunit 2 (MT-CO2) from Equus caballus (Horse).